Here is a 415-residue protein sequence, read N- to C-terminus: 4-hydroxy-3-methylbut-2-enyl diphosphate reductase (415 aa).

A [4Fe-4S] cluster-binding site is contributed by cysteine 66. Histidine 96 is a binding site for (2E)-4-hydroxy-3-methylbut-2-enyl diphosphate. Residue histidine 96 coordinates dimethylallyl diphosphate. Histidine 96 is an isopentenyl diphosphate binding site. Cysteine 158 contributes to the [4Fe-4S] cluster binding site. Position 186 (histidine 186) interacts with (2E)-4-hydroxy-3-methylbut-2-enyl diphosphate. Residue histidine 186 coordinates dimethylallyl diphosphate. Histidine 186 is a binding site for isopentenyl diphosphate. The active-site Proton donor is the glutamate 188. Threonine 259 contributes to the (2E)-4-hydroxy-3-methylbut-2-enyl diphosphate binding site. [4Fe-4S] cluster is bound at residue cysteine 297. Serine 326, serine 327, asparagine 328, and serine 388 together coordinate (2E)-4-hydroxy-3-methylbut-2-enyl diphosphate. Dimethylallyl diphosphate contacts are provided by serine 326, serine 327, asparagine 328, and serine 388. Serine 326, serine 327, asparagine 328, and serine 388 together coordinate isopentenyl diphosphate.

It belongs to the IspH family. [4Fe-4S] cluster is required as a cofactor.

The enzyme catalyses isopentenyl diphosphate + 2 oxidized [2Fe-2S]-[ferredoxin] + H2O = (2E)-4-hydroxy-3-methylbut-2-enyl diphosphate + 2 reduced [2Fe-2S]-[ferredoxin] + 2 H(+). It carries out the reaction dimethylallyl diphosphate + 2 oxidized [2Fe-2S]-[ferredoxin] + H2O = (2E)-4-hydroxy-3-methylbut-2-enyl diphosphate + 2 reduced [2Fe-2S]-[ferredoxin] + 2 H(+). It functions in the pathway isoprenoid biosynthesis; dimethylallyl diphosphate biosynthesis; dimethylallyl diphosphate from (2E)-4-hydroxy-3-methylbutenyl diphosphate: step 1/1. It participates in isoprenoid biosynthesis; isopentenyl diphosphate biosynthesis via DXP pathway; isopentenyl diphosphate from 1-deoxy-D-xylulose 5-phosphate: step 6/6. Its function is as follows. Catalyzes the conversion of 1-hydroxy-2-methyl-2-(E)-butenyl 4-diphosphate (HMBPP) into a mixture of isopentenyl diphosphate (IPP) and dimethylallyl diphosphate (DMAPP). Acts in the terminal step of the DOXP/MEP pathway for isoprenoid precursor biosynthesis. The sequence is that of 4-hydroxy-3-methylbut-2-enyl diphosphate reductase from Acaryochloris marina (strain MBIC 11017).